The following is a 194-amino-acid chain: Large ribosomal subunit protein bL9 (194 aa).

The protein belongs to the bacterial ribosomal protein bL9 family.

Its function is as follows. Binds to the 23S rRNA. The polypeptide is Large ribosomal subunit protein bL9 (Paracoccus denitrificans (strain Pd 1222)).